Here is a 149-residue protein sequence, read N- to C-terminus: Calmodulin (149 aa).

At A2 the chain carries N-acetylalanine. 4 consecutive EF-hand domains span residues 8-43, 44-79, 81-116, and 117-149; these read EQIA…LGQN, PTEA…KMKD, DTEE…LGEK, and LTDE…MMAK. Ca(2+) contacts are provided by D21, D23, D25, T27, E32, D57, D59, N61, T63, E68, D94, D96, N98, and E105. K116 carries the N6,N6,N6-trimethyllysine modification. Positions 130, 132, 134, 136, and 141 each coordinate Ca(2+).

Belongs to the calmodulin family.

In terms of biological role, calmodulin mediates the control of a large number of enzymes, ion channels and other proteins by Ca(2+). Among the enzymes to be stimulated by the calmodulin-Ca(2+) complex are a number of protein kinases and phosphatases. The polypeptide is Calmodulin (Stylonychia lemnae (Ciliate)).